Reading from the N-terminus, the 422-residue chain is Histidine--tRNA ligase (422 aa).

The protein belongs to the class-II aminoacyl-tRNA synthetase family. Homodimer.

Its subcellular location is the cytoplasm. The enzyme catalyses tRNA(His) + L-histidine + ATP = L-histidyl-tRNA(His) + AMP + diphosphate + H(+). This Photobacterium profundum (strain SS9) protein is Histidine--tRNA ligase (hisS).